We begin with the raw amino-acid sequence, 183 residues long: Ribosome-recycling factor (183 aa).

A disordered region spans residues 134-156; the sequence is DANDELKKHQSEMSQDEVKGHQD.

Belongs to the RRF family.

Its subcellular location is the cytoplasm. Responsible for the release of ribosomes from messenger RNA at the termination of protein biosynthesis. May increase the efficiency of translation by recycling ribosomes from one round of translation to another. The protein is Ribosome-recycling factor of Leptospira biflexa serovar Patoc (strain Patoc 1 / Ames).